A 367-amino-acid chain; its full sequence is Aminomethyltransferase (367 aa).

It belongs to the GcvT family. In terms of assembly, the glycine cleavage system is composed of four proteins: P, T, L and H.

It catalyses the reaction N(6)-[(R)-S(8)-aminomethyldihydrolipoyl]-L-lysyl-[protein] + (6S)-5,6,7,8-tetrahydrofolate = N(6)-[(R)-dihydrolipoyl]-L-lysyl-[protein] + (6R)-5,10-methylene-5,6,7,8-tetrahydrofolate + NH4(+). Its function is as follows. The glycine cleavage system catalyzes the degradation of glycine. The chain is Aminomethyltransferase from Saccharopolyspora erythraea (strain ATCC 11635 / DSM 40517 / JCM 4748 / NBRC 13426 / NCIMB 8594 / NRRL 2338).